An 811-amino-acid chain; its full sequence is Glycerol-3-phosphate acyltransferase (811 aa).

An HXXXXD motif motif is present at residues 309 to 314 (CHRSHM).

It belongs to the GPAT/DAPAT family.

It localises to the cell inner membrane. It carries out the reaction sn-glycerol 3-phosphate + an acyl-CoA = a 1-acyl-sn-glycero-3-phosphate + CoA. It participates in phospholipid metabolism; CDP-diacylglycerol biosynthesis; CDP-diacylglycerol from sn-glycerol 3-phosphate: step 1/3. The protein is Glycerol-3-phosphate acyltransferase of Colwellia psychrerythraea (strain 34H / ATCC BAA-681) (Vibrio psychroerythus).